Here is a 202-residue protein sequence, read N- to C-terminus: V-type ATP synthase subunit D (202 aa).

Belongs to the V-ATPase D subunit family.

Produces ATP from ADP in the presence of a proton gradient across the membrane. The protein is V-type ATP synthase subunit D (atpD) of Borreliella burgdorferi (strain ATCC 35210 / DSM 4680 / CIP 102532 / B31) (Borrelia burgdorferi).